The primary structure comprises 209 residues: MHLKRALITLSLITLPIIPFSSYAVESINNTGSMESPASVAADSTSNKQDESWWQRSKHNLSATWNTSQSHDIYIPAITWHNRWTYDKEKTDKYNERPWGAGYGVSRLDQDGDWHGLYIMAFKDSFNKWEPIGGYGYEKRWRPTHDQDFQLGLGFTAGFTMRDNWNYIPIPVLLPLASISYSKLSFQATYIPGTYNNGNVFFAWFRWQI.

The first 24 residues, 1-24, serve as a signal peptide directing secretion; that stretch reads MHLKRALITLSLITLPIIPFSSYA. Active-site residues include H81, D124, and S125.

This sequence belongs to the lipid A palmitoyltransferase family. In terms of assembly, homodimer.

It localises to the cell outer membrane. The catalysed reaction is a lipid A + a 1,2-diacyl-sn-glycero-3-phosphocholine = a hepta-acyl lipid A + a 2-acyl-sn-glycero-3-phosphocholine. It carries out the reaction a lipid IVA + a 1,2-diacyl-sn-glycero-3-phosphocholine = a lipid IVB + a 2-acyl-sn-glycero-3-phosphocholine. It catalyses the reaction a lipid IIA + a 1,2-diacyl-sn-glycero-3-phosphocholine = a lipid IIB + a 2-acyl-sn-glycero-3-phosphocholine. Transfers a fatty acid residue from the sn-1 position of a phospholipid to the N-linked hydroxyfatty acid chain on the proximal unit of lipid A or its precursors. This is Lipid A acyltransferase PagP from Pectobacterium parmentieri (strain WPP163) (Pectobacterium wasabiae (strain WPP163)).